The sequence spans 147 residues: Hemoglobin subunit gamma (147 aa).

Residues 3–147 (DFTAEEKAAI…VASAVARKYH (145 aa)) form the Globin domain. Positions 64 and 93 each coordinate heme b.

This sequence belongs to the globin family. Heterotetramer of two alpha chains and two gamma chains in fetal hemoglobin (Hb F). Red blood cells.

Its function is as follows. Gamma chains make up the fetal hemoglobin F, in combination with alpha chains. This Trichechus manatus (Caribbean manatee) protein is Hemoglobin subunit gamma (HBG).